Here is a 264-residue protein sequence, read N- to C-terminus: RNA-binding protein pos-1 (264 aa).

The disordered stretch occupies residues 56 to 82 (QDKETQNSASQPTSEQSLANRDPCTVP). Over residues 61–74 (QNSASQPTSEQSLA) the composition is skewed to polar residues. C3H1-type zinc fingers lie at residues 98–126 (AFKT…HGVH) and 141–169 (KYKT…HKIV). The Zn(2+) site is built by Cys-104, Cys-113, Cys-119, His-123, Cys-147, Cys-156, Cys-162, and His-166.

Monomer.

It localises to the cytoplasm. Its function is as follows. RNA-binding protein that coordinates cell fate specification and differentiation during early embryogenesis. Binds to a consensus pos-1 recognition element (PRE) consisting of the sequence 5'-UA(U 2-3)RGD(N 1-3)G-3', where R is any purine, D is A, G, or U, and N is any base. The PRE motif is found within the 3' untranslated region of many maternal transcripts required for early development. Binds to the 3' untranslated region (UTR) of Notch receptor homolog glp-1, thereby repressing glp-1 translation in the posterior blastomeres in the embryo. Binding to glp-1 3' UTR excludes cell fate regulator gld-1 binding to an overlapping binding site in the glp-1 3' UTR. Binds to the neg-1 3'UTR thereby opposing neg-1 expression and cytoplasmic polyadenylation of the neg-1 mRNA poly(A) tail promoted by gld-2 and gld-3. By inhibiting the cytoplasmic lengthening of neg-1 mRNA, restricts the accumulation of neg-1 protein and promotes endo-mesoderm development in anterior blastomeres. Essential for germline specification. In Caenorhabditis elegans, this protein is RNA-binding protein pos-1.